Here is a 105-residue protein sequence, read N- to C-terminus: Putative regulatory protein COPRO5265_1186 (105 aa).

Residues 76 to 105 form a disordered region; sequence RLEEEEEEEERTEPITEQEAELEEESGEDV. Residues 78 to 105 show a composition bias toward acidic residues; sequence EEEEEEEERTEPITEQEAELEEESGEDV.

It belongs to the RemA family.

The chain is Putative regulatory protein COPRO5265_1186 from Coprothermobacter proteolyticus (strain ATCC 35245 / DSM 5265 / OCM 4 / BT).